The chain runs to 248 residues: MTRRYWNITLDEMMDASVHLGHDTKQWNPKMAPYIFPKCTTRKGIHLTNLFTTARFLSEACDVVFNAASRENQFLIVGTKKKAADSVLRAAIRAQCHYVNKKWLSGMLTNWSTTETRLHKFRDLRIKEKRGRLKRLPKRDAAILKRQLSHLQRSLGGIKYMTKLPDFVIIIDQQKDYTALRECIKLGIPTISLIDTNSDPDLASLSIPANDDSRSSIKFILNKLVFAIREGRYESIGNSGLKKRKRTY.

The protein belongs to the universal ribosomal protein uS2 family.

It localises to the plastid. The protein resides in the chloroplast. This Trachelium caeruleum (Blue throatwort) protein is Small ribosomal subunit protein uS2c (rps2).